The chain runs to 329 residues: Ketol-acid reductoisomerase (NADP(+)) (329 aa).

The KARI N-terminal Rossmann domain maps to 2–182 (TQLFYDTDAD…GGTRAGILET (181 aa)). NADP(+)-binding positions include 25-28 (YGSQ), serine 51, serine 53, and 83-86 (DEFQ). The active site involves histidine 108. An NADP(+)-binding site is contributed by glycine 134. Residues 183-328 (NFKEETETDL…KGLRSMFSWL (146 aa)) enclose the KARI C-terminal knotted domain. The Mg(2+) site is built by aspartate 191, glutamate 195, glutamate 227, and glutamate 231. Residue serine 252 coordinates substrate.

The protein belongs to the ketol-acid reductoisomerase family. It depends on Mg(2+) as a cofactor.

It carries out the reaction (2R)-2,3-dihydroxy-3-methylbutanoate + NADP(+) = (2S)-2-acetolactate + NADPH + H(+). It catalyses the reaction (2R,3R)-2,3-dihydroxy-3-methylpentanoate + NADP(+) = (S)-2-ethyl-2-hydroxy-3-oxobutanoate + NADPH + H(+). It participates in amino-acid biosynthesis; L-isoleucine biosynthesis; L-isoleucine from 2-oxobutanoate: step 2/4. Its pathway is amino-acid biosynthesis; L-valine biosynthesis; L-valine from pyruvate: step 2/4. Involved in the biosynthesis of branched-chain amino acids (BCAA). Catalyzes an alkyl-migration followed by a ketol-acid reduction of (S)-2-acetolactate (S2AL) to yield (R)-2,3-dihydroxy-isovalerate. In the isomerase reaction, S2AL is rearranged via a Mg-dependent methyl migration to produce 3-hydroxy-3-methyl-2-ketobutyrate (HMKB). In the reductase reaction, this 2-ketoacid undergoes a metal-dependent reduction by NADPH to yield (R)-2,3-dihydroxy-isovalerate. This chain is Ketol-acid reductoisomerase (NADP(+)), found in Prochlorococcus marinus (strain AS9601).